The chain runs to 148 residues: Large ribosomal subunit protein bL9 (148 aa).

The protein belongs to the bacterial ribosomal protein bL9 family.

Functionally, binds to the 23S rRNA. This is Large ribosomal subunit protein bL9 from Marinobacter nauticus (strain ATCC 700491 / DSM 11845 / VT8) (Marinobacter aquaeolei).